A 306-amino-acid polypeptide reads, in one-letter code: tRNA dimethylallyltransferase (306 aa).

9-16 (GPTAVGKT) contacts ATP. Residue 11 to 16 (TAVGKT) coordinates substrate. Positions 34 to 37 (DSRQ) are interaction with substrate tRNA.

Belongs to the IPP transferase family. In terms of assembly, monomer. Mg(2+) serves as cofactor.

It carries out the reaction adenosine(37) in tRNA + dimethylallyl diphosphate = N(6)-dimethylallyladenosine(37) in tRNA + diphosphate. Its function is as follows. Catalyzes the transfer of a dimethylallyl group onto the adenine at position 37 in tRNAs that read codons beginning with uridine, leading to the formation of N6-(dimethylallyl)adenosine (i(6)A). The chain is tRNA dimethylallyltransferase from Roseiflexus castenholzii (strain DSM 13941 / HLO8).